The chain runs to 842 residues: Histidine biosynthesis trifunctional protein (842 aa).

The tract at residues 1–275 (MTFPLLPAYA…FVVEQTGVGF (275 aa)) is phosphoribosyl-AMP cyclohydrolase. The interval 276 to 357 (CHLERTSCFG…FYFALVRCAK (82 aa)) is phosphoribosyl-ATP pyrophosphohydrolase. Residues 358–842 (YGVTLDEVER…KVRMEKLGLI (485 aa)) are histidinol dehydrogenase. Positions 380-403 (KGDAKPGYTKEQPKEESKPKEVPS) are disordered. A compositionally biased stretch (basic and acidic residues) spans 390-403 (EQPKEESKPKEVPS). Glutamine 667 and histidine 670 together coordinate Zn(2+). Active-site residues include glutamate 736 and histidine 737. Zn(2+) contacts are provided by aspartate 769 and histidine 828.

It in the C-terminal section; belongs to the histidinol dehydrogenase family. Requires Zn(2+) as cofactor.

It carries out the reaction 1-(5-phospho-beta-D-ribosyl)-5'-AMP + H2O = 1-(5-phospho-beta-D-ribosyl)-5-[(5-phospho-beta-D-ribosylamino)methylideneamino]imidazole-4-carboxamide. The catalysed reaction is 1-(5-phospho-beta-D-ribosyl)-ATP + H2O = 1-(5-phospho-beta-D-ribosyl)-5'-AMP + diphosphate + H(+). The enzyme catalyses L-histidinol + 2 NAD(+) + H2O = L-histidine + 2 NADH + 3 H(+). Its pathway is amino-acid biosynthesis; L-histidine biosynthesis; L-histidine from 5-phospho-alpha-D-ribose 1-diphosphate: step 2/9. The protein operates within amino-acid biosynthesis; L-histidine biosynthesis; L-histidine from 5-phospho-alpha-D-ribose 1-diphosphate: step 3/9. It participates in amino-acid biosynthesis; L-histidine biosynthesis; L-histidine from 5-phospho-alpha-D-ribose 1-diphosphate: step 9/9. The polypeptide is Histidine biosynthesis trifunctional protein (HIS4) (Komagataella pastoris (Yeast)).